Here is a 113-residue protein sequence, read N- to C-terminus: Class I hydrophobin 1 (113 aa).

A signal peptide spans 1-17; that stretch reads MQFKFLSTVALATLAVA. Disulfide bonds link Cys-32–Cys-92, Cys-39–Cys-86, Cys-40–Cys-73, and Cys-93–Cys-106.

Belongs to the fungal hydrophobin family. Self-assembles to form functional amyloid fibrils called rodlets. Self-assembly into fibrillar rodlets occurs spontaneously at hydrophobic:hydrophilic interfaces and the rodlets further associate laterally to form amphipathic monolayers.

The protein resides in the secreted. The protein localises to the cell wall. Aerial growth, conidiation, and dispersal of filamentous fungi in the environment rely upon a capability of their secreting small amphipathic proteins called hydrophobins (HPBs) with low sequence identity. Class I can self-assemble into an outermost layer of rodlet bundles on aerial cell surfaces, conferring cellular hydrophobicity that supports fungal growth, development and dispersal; whereas Class II form highly ordered films at water-air interfaces through intermolecular interactions but contribute nothing to the rodlet structure. CoH1 is an asexual monokaryon-specific class I hydrophobin that is involved in aerial growth of mycelia. The chain is Class I hydrophobin 1 from Coprinopsis cinerea (Inky cap fungus).